Reading from the N-terminus, the 291-residue chain is ATP synthase subunit a (291 aa).

The next 6 membrane-spanning stretches (helical) occupy residues 50-70 (LDSM…FWIV), 108-128 (IAPL…MDLI), 161-181 (DPNI…FYSI), 203-223 (PVAK…TFLA), 241-261 (LIFI…SVPW), and 262-282 (AIFH…LTIV).

The protein belongs to the ATPase A chain family. F-type ATPases have 2 components, CF(1) - the catalytic core - and CF(0) - the membrane proton channel. CF(1) has five subunits: alpha(3), beta(3), gamma(1), delta(1), epsilon(1). CF(0) has three main subunits: a(1), b(2) and c(9-12). The alpha and beta chains form an alternating ring which encloses part of the gamma chain. CF(1) is attached to CF(0) by a central stalk formed by the gamma and epsilon chains, while a peripheral stalk is formed by the delta and b chains.

The protein resides in the cell inner membrane. In terms of biological role, key component of the proton channel; it plays a direct role in the translocation of protons across the membrane. The polypeptide is ATP synthase subunit a (Acinetobacter baumannii (strain SDF)).